The chain runs to 600 residues: CBP80/20-dependent translation initiation factor (600 aa).

The residue at position 1 (methionine 1) is an N-acetylmethionine. Low complexity predominate over residues 1 to 18 (MENSSAASASSEAGSSRS). Disordered regions lie at residues 1–20 (MENS…RSQE), 43–62 (DKTE…SQWT), 134–154 (KQPL…EDGD), and 175–370 (PHEA…SSPQ). The tract at residues 1–305 (MENSSAASAS…PPCSPDTLTP (305 aa)) is interaction with NCBP1/CBP80. The residue at position 18 (serine 18) is a Phosphoserine. The segment covering 52–62 (QRTQSHISQWT) has biased composition (polar residues). Positions 139–152 (HIDREGCGKGKLED) are enriched in basic and acidic residues. Residues 183–198 (TKKLFRRRRNDRRRQQ) show a composition bias toward basic residues. Positions 258–272 (PPGDKGEAGSHRNAK) are enriched in basic and acidic residues. Threonine 289 carries the post-translational modification Phosphothreonine. A Phosphoserine modification is found at serine 299. The span at 321–339 (AEIKHKDTVLPERLRERPK) shows a compositional bias: basic and acidic residues. Positions 378–579 (MEILNIMRNN…LEVIELHANS (202 aa)) constitute an MIF4G domain.

The protein belongs to the CTIF family. Interacts with NCBP1/CBP80; the interaction is direct. Associates with the eukaryotic translation initiation factor 3 (eIF-3) complex. In terms of tissue distribution, widely expressed.

Its subcellular location is the cytoplasm. The protein resides in the perinuclear region. In terms of biological role, specifically required for the pioneer round of mRNA translation mediated by the cap-binding complex (CBC), that takes place during or right after mRNA export via the nuclear pore complex (NPC). Acts via its interaction with the NCBP1/CBP80 component of the CBC complex and recruits the 40S small subunit of the ribosome via eIF3. In contrast, it is not involved in steady state translation, that takes place when the CBC complex is replaced by cytoplasmic cap-binding protein eIF4E. Also required for nonsense-mediated mRNA decay (NMD), the pioneer round of mRNA translation mediated by the cap-binding complex playing a central role in nonsense-mediated mRNA decay (NMD). The polypeptide is CBP80/20-dependent translation initiation factor (Ctif) (Mus musculus (Mouse)).